The sequence spans 225 residues: MEKLLWCLLIMISFSRTFGHEDMFKKAFVFPKESDTSYVSLEAESKKPLNTFTVCLHFYTALSTVRSFSVFSYATKKNSNDILIFWNKDKQYTFGVGGAEVRFMVSEIPEAPTHICASWESATGIVEFWIDGKPKVRKSLHKGYTVGPDASIILGQEQDSYGGDFDAKQSLVGDIGDVNMWDFVLSPEQISTVYVGGTLSPNVLNWRALNYKAQGDVFIKPQLWS.

Residues 1–19 (MEKLLWCLLIMISFSRTFG) form the signal peptide. The Pentraxin (PTX) domain maps to 24 to 225 (FKKAFVFPKE…DVFIKPQLWS (202 aa)). Cys-55 and Cys-116 form a disulfide bridge. Positions 80, 157, 158, 159, and 169 each coordinate Ca(2+).

The protein belongs to the pentraxin family. In terms of assembly, homopentamer. Pentraxin (or pentaxin) have a discoid arrangement of 5 non-covalently bound subunits. Interacts with FCN1; may regulate monocyte activation by FCN1. Ca(2+) is required as a cofactor. In terms of tissue distribution, found in plasma.

It localises to the secreted. Functionally, displays several functions associated with host defense: it promotes agglutination, bacterial capsular swelling, phagocytosis and complement fixation through its calcium-dependent binding to phosphorylcholine. Can interact with DNA and histones and may scavenge nuclear material released from damaged circulating cells. The sequence is that of C-reactive protein (Crp) from Mus musculus (Mouse).